Here is a 761-residue protein sequence, read N- to C-terminus: MTSRVDTVDNAASTPDHPQPFAELGLKDDEYARIREILGRRPTDAELAMYSVMWSEHCSYKSSKVHLRYFGQTTTEEMRSAMLAGIGENAGVVDIGDGWAVTFKVESHNHPSYVEPYQGAATGVGGIVRDIMAMGARPIAVMDQLRFGAADAPDTRRVFDGVVRGIGGYGNSLGLPNIGGETVFDASYAGNPLVNALCAGVLRKEDLHLAFASGAGNKIILFGARTGLDGIGGVSVLASETFGGDEADGASRKKLPSVQVGDPFTEKVLIECCLELYAAHLVVGIQDLGGAGLSCATSELASAGDGGMHIDLDKVPLRATGMTPAEVLSSESQERMCAVVTPENVDAFMAVCRKWDVLATVIGEVTDGDRLRITWHGETVVDVPPRTVAHEGPVYQRPVARPDTQDALIADTAGGLARPASAAELRQTLLDMIGSPHLCSRAFITEQYDRYVRGNTVLAEHADSGVIRVDEQTGRGIALATDASGRYTLLDPYRGAQLALAEAYRNVAASGATPVAVTNCLNFGSPEDPGVMWQFSEAVRGLADGCVTLGIPVTGGNVSFYNQTGTTPILPTPVVGVLGVIDDVNRRIPTGFGTEPGETLILLGDTADEFDGSIWAQVAHDHLGGTPPKVDLAREQLLAQVLTAASRDGLVSAAHDLSEGGLIQAVVESALAGETGCRLLLPEGADPFVALFSESAGRVLVAVPRTEESRFMSMCEARQLPAVRIGVVDQGSDSVEVQGQFSVTLAELREIHEGVLPGLFG.

Positions 1 to 13 are enriched in polar residues; it reads MTSRVDTVDNAAS. The segment at 1-23 is disordered; sequence MTSRVDTVDNAASTPDHPQPFAE. His57 is an active-site residue. Tyr60 and Lys104 together coordinate ATP. Residue Glu106 participates in Mg(2+) binding. Residues 107-110 and Arg129 contribute to the substrate site; that span reads SHNH. His108 acts as the Proton acceptor in catalysis. Mg(2+) is bound at residue Asp130. Gln259 provides a ligand contact to substrate. Mg(2+) is bound at residue Asp287. 331-333 is a binding site for substrate; that stretch reads ESQ. Positions 519 and 556 each coordinate ATP. Position 557 (Asn557) interacts with Mg(2+). Residue Ser559 coordinates substrate.

Belongs to the FGAMS family. In terms of assembly, monomer. Part of the FGAM synthase complex composed of 1 PurL, 1 PurQ and 2 PurS subunits.

Its subcellular location is the cytoplasm. The enzyme catalyses N(2)-formyl-N(1)-(5-phospho-beta-D-ribosyl)glycinamide + L-glutamine + ATP + H2O = 2-formamido-N(1)-(5-O-phospho-beta-D-ribosyl)acetamidine + L-glutamate + ADP + phosphate + H(+). The protein operates within purine metabolism; IMP biosynthesis via de novo pathway; 5-amino-1-(5-phospho-D-ribosyl)imidazole from N(2)-formyl-N(1)-(5-phospho-D-ribosyl)glycinamide: step 1/2. Its function is as follows. Part of the phosphoribosylformylglycinamidine synthase complex involved in the purines biosynthetic pathway. Catalyzes the ATP-dependent conversion of formylglycinamide ribonucleotide (FGAR) and glutamine to yield formylglycinamidine ribonucleotide (FGAM) and glutamate. The FGAM synthase complex is composed of three subunits. PurQ produces an ammonia molecule by converting glutamine to glutamate. PurL transfers the ammonia molecule to FGAR to form FGAM in an ATP-dependent manner. PurS interacts with PurQ and PurL and is thought to assist in the transfer of the ammonia molecule from PurQ to PurL. The chain is Phosphoribosylformylglycinamidine synthase subunit PurL from Mycobacteroides abscessus (strain ATCC 19977 / DSM 44196 / CCUG 20993 / CIP 104536 / JCM 13569 / NCTC 13031 / TMC 1543 / L948) (Mycobacterium abscessus).